Consider the following 136-residue polypeptide: Protein NrdI (136 aa).

The protein belongs to the NrdI family.

Its function is as follows. Probably involved in ribonucleotide reductase function. The sequence is that of Protein NrdI from Shigella boydii serotype 4 (strain Sb227).